The chain runs to 465 residues: Glutamate--tRNA ligase (465 aa).

The short motif at 11–21 (PSPTGYLHIGG) is the 'HIGH' region element. Residues 243–247 (KLSKR) carry the 'KMSKS' region motif. Position 246 (lysine 246) interacts with ATP.

It belongs to the class-I aminoacyl-tRNA synthetase family. Glutamate--tRNA ligase type 1 subfamily. As to quaternary structure, monomer.

Its subcellular location is the cytoplasm. The enzyme catalyses tRNA(Glu) + L-glutamate + ATP = L-glutamyl-tRNA(Glu) + AMP + diphosphate. In terms of biological role, catalyzes the attachment of glutamate to tRNA(Glu) in a two-step reaction: glutamate is first activated by ATP to form Glu-AMP and then transferred to the acceptor end of tRNA(Glu). This chain is Glutamate--tRNA ligase, found in Aromatoleum aromaticum (strain DSM 19018 / LMG 30748 / EbN1) (Azoarcus sp. (strain EbN1)).